A 312-amino-acid chain; its full sequence is Cobalamin biosynthesis protein CobD (312 aa).

Helical transmembrane passes span 61–81, 83–103, 152–172, and 292–312; these read IALL…LPLL, IIVP…AQHA, DAVF…AVLY, and GMWL…AIHA.

The protein belongs to the CobD/CbiB family.

The protein resides in the cell membrane. It functions in the pathway cofactor biosynthesis; adenosylcobalamin biosynthesis. Functionally, converts cobyric acid to cobinamide by the addition of aminopropanol on the F carboxylic group. The chain is Cobalamin biosynthesis protein CobD from Chromobacterium violaceum (strain ATCC 12472 / DSM 30191 / JCM 1249 / CCUG 213 / NBRC 12614 / NCIMB 9131 / NCTC 9757 / MK).